The primary structure comprises 326 residues: Phospho-N-acetylmuramoyl-pentapeptide-transferase (326 aa).

10 helical membrane-spanning segments follow: residues 2–22 (ILAT…FPYF), 51–71 (VPPM…LLWV), 73–93 (LTPE…LGFI), 113–133 (ILIQ…YSAE), 143–163 (GVII…IVGS), 175–195 (GLAA…AYIT), 199–219 (MNIT…LWFN), 225–245 (IFMG…TSVL), 250–270 (MLFA…IIQI), and 305–325 (VIVM…ITFL).

Belongs to the glycosyltransferase 4 family. MraY subfamily. Requires Mg(2+) as cofactor.

It is found in the cell membrane. It carries out the reaction UDP-N-acetyl-alpha-D-muramoyl-L-alanyl-gamma-D-glutamyl-meso-2,6-diaminopimeloyl-D-alanyl-D-alanine + di-trans,octa-cis-undecaprenyl phosphate = di-trans,octa-cis-undecaprenyl diphospho-N-acetyl-alpha-D-muramoyl-L-alanyl-D-glutamyl-meso-2,6-diaminopimeloyl-D-alanyl-D-alanine + UMP. It participates in cell wall biogenesis; peptidoglycan biosynthesis. In terms of biological role, catalyzes the initial step of the lipid cycle reactions in the biosynthesis of the cell wall peptidoglycan: transfers peptidoglycan precursor phospho-MurNAc-pentapeptide from UDP-MurNAc-pentapeptide onto the lipid carrier undecaprenyl phosphate, yielding undecaprenyl-pyrophosphoryl-MurNAc-pentapeptide, known as lipid I. The polypeptide is Phospho-N-acetylmuramoyl-pentapeptide-transferase (Wolbachia sp. subsp. Drosophila simulans (strain wRi)).